A 153-amino-acid polypeptide reads, in one-letter code: uncharacterized protein (153 aa).

Disordered stretches follow at residues 24 to 87 and 101 to 153; these read PEDS…DRPL and GDPR…RIPS. A compositionally biased stretch (low complexity) spans 27-37; sequence SSCPCPRLPLS. Over residues 143–153 the composition is skewed to basic and acidic residues; it reads TRKESSCRIPS.

This is an uncharacterized protein from Dryophytes versicolor (chameleon treefrog).